Reading from the N-terminus, the 588-residue chain is Progranulin (588 aa).

An N-terminal signal peptide occupies residues 1–17; it reads MWILVSWLALVARLVAG. Residue N38 is glycosylated (N-linked (GlcNAc...) asparagine). Intrachain disulfides connect C125–C138, C132–C148, C281–C293, C287–C303, C294–C311, C304–C318, C312–C325, C319–C332, C363–C375, C369–C385, C394–C407, and C401–C413. Residue N372 is glycosylated (N-linked (GlcNAc...) asparagine). N525 carries N-linked (GlcNAc...) asparagine glycosylation.

The protein belongs to the granulin family. In terms of assembly, progranulin is secreted as a homodimer. Interacts with SLPI; interaction protects progranulin from proteolysis. Interacts (via region corresponding to granulin-7 peptide) with CTSD; stabilizes CTSD and increases its proteolytic activity. Interacts (via region corresponding to granulin-7 peptide) with SORT1; this interaction mediates endocytosis and lysosome delivery of progranulin; interaction occurs at the neuronal cell surface in a stressed nervous system. Interacts with PSAP; facilitates lysosomal delivery of progranulin from the extracellular space and the biosynthetic pathway. Forms a complex with PSAP and M6PR; PSAP bridges the binding between progranulin and M6PR. Forms a complex with PSAP and SORT1; progranulin bridges the interaction between PSAP and SORT1; facilitates lysosomal targeting of PSAP via SORT1; interaction enhances PSAP uptake in primary cortical neurons. Interacts (via regions corresponding to granulin-2 and granulin-7 peptides) with GBA1; this interaction prevents aggregation of GBA1-SCARB2 complex via interaction with HSPA1A upon stress. Interacts (via region corresponding to granulin-7 peptide) with HSPA1A; mediates recruitment of HSPA1A to GBA1 and prevents GBA1 aggregation in response to stress. Post-translationally, cleaved by ELANE; proteolysis is blocked by SLPI and is concentration- and time-dependent and induces CXCL8/IL-8 production; granulin-3 and granulin-4 are resistant to ELANE. Cleaved by CTSL in lysosome thus regulating the maturation and turnover of progranulin within the lysosome. As to expression, ubiquitous; most abundant in the spleen and several tissues of endocrine significance.

The protein localises to the secreted. The protein resides in the lysosome. Secreted protein that acts as a key regulator of lysosomal function and as a growth factor involved in inflammation, wound healing and cell proliferation. Regulates protein trafficking to lysosomes, and also the activity of lysosomal enzymes. Also facilitates the acidification of lysosomes, causing degradation of mature CTSD by CTSB. In addition, functions as a wound-related growth factor that acts directly on dermal fibroblasts and endothelial cells to promote division, migration and the formation of capillary-like tubule structures. Also promotes epithelial cell proliferation by blocking TNF-mediated neutrophil activation preventing release of oxidants and proteases. Moreover, modulates inflammation in neurons by preserving neurons survival, axonal outgrowth and neuronal integrity. Functionally, inhibits epithelial cell proliferation and induces epithelial cells to secrete IL-8. In terms of biological role, stabilizes CTSD through interaction with CTSD leading to maintain its aspartic-type peptidase activity. The protein is Progranulin (Grn) of Rattus norvegicus (Rat).